We begin with the raw amino-acid sequence, 1292 residues long: HMG domain-containing protein 3 (1292 aa).

Residues 42–110 (TKKPRSAYLL…GLDPNSKLSA (69 aa)) constitute a DNA-binding region (HMG box). Disordered regions lie at residues 363 to 391 (SKGSVVKRNQQPVTTEQNSSKENASKLTL), 448 to 505 (VQPE…GRAR), and 562 to 588 (KQLGQPIQQPSGPGEVKLPSGPSNRTS). Positions 370 to 391 (RNQQPVTTEQNSSKENASKLTL) are enriched in polar residues. Over residues 467 to 478 (PTPSEGTSTSSP) the composition is skewed to low complexity. Polar residues predominate over residues 562–572 (KQLGQPIQQPS).

It localises to the nucleus. This Homo sapiens (Human) protein is HMG domain-containing protein 3.